Here is a 339-residue protein sequence, read N- to C-terminus: MPRRGPFLALFAGCVSRGASRSPPGHTLTRRPMDPVFLQIGNFTIAWYGVLMMLGIAAGYWLGLKLARERGLNADLFERMILWMLFWGFVGARLVFVLTSWHIFEGIPFPRVLLDIVNLRNGGISIHGGLIGGVLTLIYFARRYRLNFYQYADLAVPGVAFGIIGGRLGNIMNGTDTVGRVTGWPIGYHWPASARAFHEGMCRPNPNPDMDLSKYCHEVGGQIMMTAPVHFTQLYGVIIGIILAVASYFWLKSRVPGWAFWQFWLWYSILRAGWEETFRLNPLTIKTYLNQGLDAPGIGLWTDTQIFSVPLILVSLWMLWRLRQRRQVTVPTVPVQSQS.

The next 3 helical transmembrane spans lie at 43–63, 81–101, and 121–141; these read FTIA…YWLG, ILWM…LTSW, and NGGI…IYFA. Residue Arg167 participates in a 1,2-diacyl-sn-glycero-3-phospho-(1'-sn-glycerol) binding. Transmembrane regions (helical) follow at residues 231-251 and 300-320; these read FTQL…YFWL and LWTD…WMLW.

Belongs to the Lgt family.

The protein resides in the cell membrane. The enzyme catalyses L-cysteinyl-[prolipoprotein] + a 1,2-diacyl-sn-glycero-3-phospho-(1'-sn-glycerol) = an S-1,2-diacyl-sn-glyceryl-L-cysteinyl-[prolipoprotein] + sn-glycerol 1-phosphate + H(+). It participates in protein modification; lipoprotein biosynthesis (diacylglyceryl transfer). In terms of biological role, catalyzes the transfer of the diacylglyceryl group from phosphatidylglycerol to the sulfhydryl group of the N-terminal cysteine of a prolipoprotein, the first step in the formation of mature lipoproteins. This Deinococcus radiodurans (strain ATCC 13939 / DSM 20539 / JCM 16871 / CCUG 27074 / LMG 4051 / NBRC 15346 / NCIMB 9279 / VKM B-1422 / R1) protein is Phosphatidylglycerol--prolipoprotein diacylglyceryl transferase.